We begin with the raw amino-acid sequence, 510 residues long: Calcium-dependent lipid-binding protein (510 aa).

Residues 1-21 (MGLISGILFGIIFGVALMAGW) traverse the membrane as a helical segment. SMP-LTD domains follow at residues 66–248 (AFEQ…VPIG) and 66–250 (AFEQ…IGGI). Positions 226 to 488 (DDTVDTIVKD…FMGRTITGQS (263 aa)) are phospholipid binding. C2 domains are found at residues 242–362 (RIVV…ELEL) and 246–364 (PIGG…ELNL). 8 residues coordinate Ca(2+): K278, E279, D285, D333, K334, D335, D339, and E340. The stretch at 390-417 (EFNKEEQMAALEDEKKIMEERKRLKEAG) forms a coiled coil. Residues 461 to 500 (MVGSGFGAVGSGLSKAGRFMGRTITGQSSKRSGSSTPVNT) form the C2 3 domain. Positions 484 to 510 (ITGQSSKRSGSSTPVNTVPENDGAKQQ) are disordered.

It belongs to the synaptotagmin family. Interacts with the biotrophic pathogenic fungi Microbotryum violaceum effector MVLG_01732. Ca(2+) is required as a cofactor. Mostly expressed in rosette leaves and flowers, to lower extent, in cauline leaves, roots and stems, and, at low levels, in siliques.

It localises to the nucleus membrane. May be involved in membrane trafficking. Acts as a repressor of abiotic stress (e.g. drought and salt) responses by binding specifically to the promoter of THAS1 to regulate its transcription. Binds to membrane lipid ceramides. The protein is Calcium-dependent lipid-binding protein of Arabidopsis thaliana (Mouse-ear cress).